The chain runs to 237 residues: Carbohydrate deacetylase (237 aa).

2 residues coordinate Mg(2+): His-59 and His-125.

This sequence belongs to the YdjC deacetylase family. Mg(2+) is required as a cofactor.

In terms of biological role, probably catalyzes the deacetylation of acetylated carbohydrates an important step in the degradation of oligosaccharides. The sequence is that of Carbohydrate deacetylase from Halalkalibacterium halodurans (strain ATCC BAA-125 / DSM 18197 / FERM 7344 / JCM 9153 / C-125) (Bacillus halodurans).